The sequence spans 440 residues: tRNA-2-methylthio-N(6)-dimethylallyladenosine synthase (440 aa).

Residues 7 to 123 (NTFYIHTFGC…LPQLIEQARS (117 aa)) form the MTTase N-terminal domain. 6 residues coordinate [4Fe-4S] cluster: Cys16, Cys52, Cys86, Cys159, Cys163, and Cys166. The Radical SAM core domain occupies 145-375 (RQGSISAFVP…IDLQNTISGE (231 aa)). Residues 378 to 440 (QQAIGSVVEV…TSATLTGRPV (63 aa)) enclose the TRAM domain.

The protein belongs to the methylthiotransferase family. MiaB subfamily. In terms of assembly, monomer. The cofactor is [4Fe-4S] cluster.

It localises to the cytoplasm. The catalysed reaction is N(6)-dimethylallyladenosine(37) in tRNA + (sulfur carrier)-SH + AH2 + 2 S-adenosyl-L-methionine = 2-methylsulfanyl-N(6)-dimethylallyladenosine(37) in tRNA + (sulfur carrier)-H + 5'-deoxyadenosine + L-methionine + A + S-adenosyl-L-homocysteine + 2 H(+). Its function is as follows. Catalyzes the methylthiolation of N6-(dimethylallyl)adenosine (i(6)A), leading to the formation of 2-methylthio-N6-(dimethylallyl)adenosine (ms(2)i(6)A) at position 37 in tRNAs that read codons beginning with uridine. The protein is tRNA-2-methylthio-N(6)-dimethylallyladenosine synthase of Pelodictyon phaeoclathratiforme (strain DSM 5477 / BU-1).